Reading from the N-terminus, the 359-residue chain is Nicotinate-nucleotide--dimethylbenzimidazole phosphoribosyltransferase (359 aa).

Glu-318 acts as the Proton acceptor in catalysis.

Belongs to the CobT family. Homodimer.

It carries out the reaction 5,6-dimethylbenzimidazole + nicotinate beta-D-ribonucleotide = alpha-ribazole 5'-phosphate + nicotinate + H(+). It functions in the pathway nucleoside biosynthesis; alpha-ribazole biosynthesis; alpha-ribazole from 5,6-dimethylbenzimidazole: step 1/2. In terms of biological role, catalyzes the synthesis of alpha-ribazole-5'-phosphate from nicotinate mononucleotide (NAMN) and 5,6-dimethylbenzimidazole (DMB). This chain is Nicotinate-nucleotide--dimethylbenzimidazole phosphoribosyltransferase, found in Escherichia coli O17:K52:H18 (strain UMN026 / ExPEC).